The sequence spans 174 residues: Flavodoxin (174 aa).

Positions 4-166 constitute a Flavodoxin-like domain; the sequence is IGIFFGSDTG…RIIQWTKKIK (163 aa).

This sequence belongs to the flavodoxin family. The cofactor is FMN.

Functionally, low-potential electron donor to a number of redox enzymes. This is Flavodoxin (fldA) from Buchnera aphidicola subsp. Baizongia pistaciae (strain Bp).